The primary structure comprises 352 residues: Small ribosomal subunit biogenesis GTPase RsgA 2 (352 aa).

A CP-type G domain is found at 100–257 (RQDGQIIATN…VIDTPGMREL (158 aa)). GTP contacts are provided by residues 147–150 (TKAD) and 199–207 (GSSGVGKST). The Zn(2+) site is built by cysteine 278, cysteine 283, histidine 285, and cysteine 291.

This sequence belongs to the TRAFAC class YlqF/YawG GTPase family. RsgA subfamily. Monomer. Associates with 30S ribosomal subunit, binds 16S rRNA. Zn(2+) is required as a cofactor.

It is found in the cytoplasm. In terms of biological role, one of several proteins that assist in the late maturation steps of the functional core of the 30S ribosomal subunit. Helps release RbfA from mature subunits. May play a role in the assembly of ribosomal proteins into the subunit. Circularly permuted GTPase that catalyzes slow GTP hydrolysis, GTPase activity is stimulated by the 30S ribosomal subunit. In Lactiplantibacillus plantarum (strain ATCC BAA-793 / NCIMB 8826 / WCFS1) (Lactobacillus plantarum), this protein is Small ribosomal subunit biogenesis GTPase RsgA 2.